The chain runs to 1415 residues: Zygote defective protein 9 (1415 aa).

TOG regions lie at residues 1 to 250 (MSNW…AKNA) and 251 to 530 (PPVA…AGPA). A coiled-coil region spans residues 21 to 48 (DELRESKKWQERKEALEALLKVLTDNER). 4 HEAT repeats span residues 30 to 68 (QERKEALEALLKVLTDNERLSTKASYAELIGHLQMVLAK), 95 to 132 (SFAGPLLPVIFEKMKEKKPMLREPLVDCSNEVGRTMQS), 135 to 172 (TGQEDILAALAKPNPQIKQQTALFVARQLDLVVPAKQP), and 179 to 217 (VVPVFGKLTGDADQDVREASLQGLGAVQRIIGDKNVKNL). Residues 243–278 (AEEQAKNAPPVAPTSSTPSASAASGDPSGGTATAVV) form a disordered region. Over residues 255–276 (PTSSTPSASAASGDPSGGTATA) the composition is skewed to low complexity. HEAT repeat units lie at residues 339 to 377 (ANYGALVERLQKVLEKDANINVAALAANCITGIANGLRT), 381 to 418 (PFAVSVTPIIFEKFKEKKPTLRDPLVACIDAVVATTNL), 420 to 457 (AVGEIVLAALGKPNPSIKTQTDLFLQRCFMKLNSQTMP), and 464 to 502 (LIPSLIKHSGDSDSEVREASYAAMGAMMRAIGEKPSLQL). The segment at 544 to 603 (APPAAAPPKKTAPPKKQPEDEEVVEEEDEPLKPPPGDKKKKVPVKENEENEPPVVAPKAE) is disordered. Residues 562 to 572 (EDEEVVEEEDE) are compositionally biased toward acidic residues. The segment at 602–867 (AELLLSDNED…VEERIKRTGV (266 aa)) is TOG 3. HEAT repeat units follow at residues 706–743 (IKVLELCKVIVELIRDTETPMSQEEVSAFVPYLLLKTG), 764–801 (VGPLKMTPMLLDALKSKNARQRSECLLVIEYYITNAGI), and 804–841 (LKSLSVEKTVAPFVGDKDVNVRNAAINVLVACFKFEGD). The tract at residues 867–914 (VKPGSGVVTSPPTGGPKILVPQQQGSVVRRPASRSRTREPEPEEVQSD) is disordered.

It belongs to the TOG/XMAP215 family. Interacts with tac-1 to form a heterodimer.

It is found in the cytoplasm. The protein resides in the cytoskeleton. The protein localises to the spindle pole. Its subcellular location is the microtubule organizing center. It localises to the centrosome. In terms of biological role, plays a major role in organizing microtubules and spindle poles during mitosis and meiosis in one-cell stage embryos. Required for default nucleus positioning in oocytes. The polypeptide is Zygote defective protein 9 (Caenorhabditis elegans).